The chain runs to 83 residues: U25-theraphotoxin-Cg1a (83 aa).

The signal sequence occupies residues 1–23 (MRFHTLLFLSFLLLVSCALICTA). A propeptide spanning residues 24-48 (QHPGLEKSGMFHENVGKGQHIEEKR) is cleaved from the precursor. 3 cysteine pairs are disulfide-bonded: cysteine 50-cysteine 66, cysteine 57-cysteine 71, and cysteine 65-cysteine 81.

The protein belongs to the neurotoxin 07 (Beta/delta-agtx) family. 03 (aga-4) subfamily. JZTX sub-subfamily. In terms of tissue distribution, expressed by the venom gland.

The protein localises to the secreted. Inhibits TTX-sensitive sodium currents in rat dorsal root ganglion (DRG) neurons. This Chilobrachys guangxiensis (Chinese earth tiger tarantula) protein is U25-theraphotoxin-Cg1a.